The sequence spans 105 residues: Phosphoribosyl-ATP pyrophosphatase (105 aa).

It belongs to the PRA-PH family.

It is found in the cytoplasm. It carries out the reaction 1-(5-phospho-beta-D-ribosyl)-ATP + H2O = 1-(5-phospho-beta-D-ribosyl)-5'-AMP + diphosphate + H(+). It functions in the pathway amino-acid biosynthesis; L-histidine biosynthesis; L-histidine from 5-phospho-alpha-D-ribose 1-diphosphate: step 2/9. This is Phosphoribosyl-ATP pyrophosphatase from Ruegeria sp. (strain TM1040) (Silicibacter sp.).